Here is a 628-residue protein sequence, read N- to C-terminus: NUAK family SNF1-like kinase 2 (628 aa).

Methionine 1 is modified (N-acetylmethionine). The Protein kinase domain occupies 53 to 303 (YEFLETLGKG…LEDVASHWWV (251 aa)). Residues 59–67 (LGKGTYGKV) and lysine 81 each bind ATP. The active-site Proton acceptor is the aspartate 175. Threonine 208 is subject to Phosphothreonine. Disordered regions lie at residues 355–492 (KQHA…PQAS) and 522–570 (GSLD…PLRG). A compositionally biased stretch (pro residues) spans 428 to 444 (ELSPIPVSPGQAAPPLP). Serine 435 is subject to Phosphoserine. Residues 457 to 469 (SGYYSSPEPSESG) show a composition bias toward low complexity. A phosphoserine mark is found at serine 523, serine 544, serine 547, and serine 573.

Belongs to the protein kinase superfamily. CAMK Ser/Thr protein kinase family. SNF1 subfamily. Mg(2+) is required as a cofactor. Post-translationally, phosphorylated at Thr-208 by STK11/LKB1 in complex with STE20-related adapter-alpha (STRADA) pseudo kinase and CAB39. Autophosphorylation is also possible at Thr-208.

The enzyme catalyses L-seryl-[protein] + ATP = O-phospho-L-seryl-[protein] + ADP + H(+). The catalysed reaction is L-threonyl-[protein] + ATP = O-phospho-L-threonyl-[protein] + ADP + H(+). Activated by phosphorylation on Thr-208. Functionally, stress-activated kinase involved in tolerance to glucose starvation. Induces cell-cell detachment by increasing F-actin conversion to G-actin. Expression is induced by CD95 or TNF-alpha, via NF-kappa-B. Protects cells from CD95-mediated apoptosis and is required for the increased motility and invasiveness of CD95-activated tumor cells. Phosphorylates LATS1 and LATS2. Plays a key role in neural tube closure during embryonic development through LATS2 phosphorylation and regulation of the nuclear localization of YAP1 a critical downstream regulatory target in the Hippo signaling pathway. This chain is NUAK family SNF1-like kinase 2, found in Pongo abelii (Sumatran orangutan).